The primary structure comprises 385 residues: 3-hydroxyisobutyryl-CoA hydrolase, mitochondrial (385 aa).

The substrate site is built by glutamate 120, glycine 145, glutamate 168, and aspartate 176.

This sequence belongs to the enoyl-CoA hydratase/isomerase family.

The protein localises to the mitochondrion. It catalyses the reaction 3-hydroxy-2-methylpropanoyl-CoA + H2O = 3-hydroxy-2-methylpropanoate + CoA + H(+). It participates in amino-acid degradation; L-valine degradation. Functionally, hydrolyzes 3-hydroxyisobutyryl-CoA (HIBYL-CoA), a saline catabolite. Has high activity toward isobutyryl-CoA. Could be an isobutyryl-CoA dehydrogenase that functions in valine catabolism. Also hydrolyzes 3-hydroxypropanoyl-CoA. The protein is 3-hydroxyisobutyryl-CoA hydrolase, mitochondrial (HIBCH) of Gallus gallus (Chicken).